The sequence spans 67 residues: ATP synthase F(0) complex subunit 8 (67 aa).

Residues 8 to 24 form a helical membrane-spanning segment; the sequence is TWLIMISSMILTLFITF. Lysine 54 bears the N6-acetyllysine; alternate mark. Lysine 54 is subject to N6-succinyllysine; alternate. The residue at position 57 (lysine 57) is an N6-acetyllysine.

It belongs to the ATPase protein 8 family. Component of the ATP synthase complex composed at least of ATP5F1A/subunit alpha, ATP5F1B/subunit beta, ATP5MC1/subunit c (homooctomer), MT-ATP6/subunit a, MT-ATP8/subunit 8, ATP5ME/subunit e, ATP5MF/subunit f, ATP5MG/subunit g, ATP5MK/subunit k, ATP5MJ/subunit j, ATP5F1C/subunit gamma, ATP5F1D/subunit delta, ATP5F1E/subunit epsilon, ATP5PF/subunit F6, ATP5PB/subunit b, ATP5PD/subunit d, ATP5PO/subunit OSCP. ATP synthase complex consists of a soluble F(1) head domain (subunits alpha(3) and beta(3)) - the catalytic core - and a membrane F(0) domain - the membrane proton channel (subunits c, a, 8, e, f, g, k and j). These two domains are linked by a central stalk (subunits gamma, delta, and epsilon) rotating inside the F1 region and a stationary peripheral stalk (subunits F6, b, d, and OSCP). Interacts with PRICKLE3.

It localises to the mitochondrion membrane. In terms of biological role, subunit 8, of the mitochondrial membrane ATP synthase complex (F(1)F(0) ATP synthase or Complex V) that produces ATP from ADP in the presence of a proton gradient across the membrane which is generated by electron transport complexes of the respiratory chain. ATP synthase complex consist of a soluble F(1) head domain - the catalytic core - and a membrane F(1) domain - the membrane proton channel. These two domains are linked by a central stalk rotating inside the F(1) region and a stationary peripheral stalk. During catalysis, ATP synthesis in the catalytic domain of F(1) is coupled via a rotary mechanism of the central stalk subunits to proton translocation. In vivo, can only synthesize ATP although its ATP hydrolase activity can be activated artificially in vitro. Part of the complex F(0) domain. In Halichoerus grypus (Gray seal), this protein is ATP synthase F(0) complex subunit 8.